Reading from the N-terminus, the 206-residue chain is Small ribosomal subunit protein uS4 (206 aa).

An S4 RNA-binding domain is found at 96-156 (CRLDNVVYRM…EKSLGQLRIV (61 aa)).

This sequence belongs to the universal ribosomal protein uS4 family. Part of the 30S ribosomal subunit. Contacts protein S5. The interaction surface between S4 and S5 is involved in control of translational fidelity.

Functionally, one of the primary rRNA binding proteins, it binds directly to 16S rRNA where it nucleates assembly of the body of the 30S subunit. With S5 and S12 plays an important role in translational accuracy. In Pseudomonas putida (strain ATCC 47054 / DSM 6125 / CFBP 8728 / NCIMB 11950 / KT2440), this protein is Small ribosomal subunit protein uS4.